Here is a 382-residue protein sequence, read N- to C-terminus: Inactive serine protease 54 (382 aa).

The first 20 residues, 1–20, serve as a signal peptide directing secretion; that stretch reads MAELRGILLLLLYMSHSSSA. One can recognise a Peptidase S1 domain in the interval 29–258; sequence IVDQLHENLV…YSNWIIAKTR (230 aa). Asn-113 carries N-linked (GlcNAc...) asparagine glycosylation. Cystine bridges form between Cys-154-Cys-216, Cys-185-Cys-195, and Cys-206-Cys-237.

The protein belongs to the peptidase S1 family. Plasma kallikrein subfamily.

Its subcellular location is the secreted. The sequence is that of Inactive serine protease 54 (Prss54) from Rattus norvegicus (Rat).